The following is a 615-amino-acid chain: Dihydroxy-acid dehydratase (615 aa).

Mg(2+) is bound at residue D81. C122 serves as a coordination point for [2Fe-2S] cluster. Residues D123 and K124 each contribute to the Mg(2+) site. N6-carboxylysine is present on K124. A [2Fe-2S] cluster-binding site is contributed by C195. E491 is a binding site for Mg(2+). S517 (proton acceptor) is an active-site residue.

It belongs to the IlvD/Edd family. As to quaternary structure, homodimer. It depends on [2Fe-2S] cluster as a cofactor. Requires Mg(2+) as cofactor.

It catalyses the reaction (2R)-2,3-dihydroxy-3-methylbutanoate = 3-methyl-2-oxobutanoate + H2O. The catalysed reaction is (2R,3R)-2,3-dihydroxy-3-methylpentanoate = (S)-3-methyl-2-oxopentanoate + H2O. It functions in the pathway amino-acid biosynthesis; L-isoleucine biosynthesis; L-isoleucine from 2-oxobutanoate: step 3/4. It participates in amino-acid biosynthesis; L-valine biosynthesis; L-valine from pyruvate: step 3/4. Functions in the biosynthesis of branched-chain amino acids. Catalyzes the dehydration of (2R,3R)-2,3-dihydroxy-3-methylpentanoate (2,3-dihydroxy-3-methylvalerate) into 2-oxo-3-methylpentanoate (2-oxo-3-methylvalerate) and of (2R)-2,3-dihydroxy-3-methylbutanoate (2,3-dihydroxyisovalerate) into 2-oxo-3-methylbutanoate (2-oxoisovalerate), the penultimate precursor to L-isoleucine and L-valine, respectively. The chain is Dihydroxy-acid dehydratase from Shewanella pealeana (strain ATCC 700345 / ANG-SQ1).